The following is a 167-amino-acid chain: MMSTETVPPVKRVQGHKGYKNRRRLSRELALQGIYQWQVTGGNARDIGMQLQQVSFFSKADGPYFSDLLQGVLEHAADLQTQIQPHLDRQIAELSPVECSILLIGTYEMVYRPEIPCRAIINEAIELAKSYGGTDGHKYVNGVLDKLATRLRAVELQHPPARNKDSG.

Belongs to the NusB family.

Involved in transcription antitermination. Required for transcription of ribosomal RNA (rRNA) genes. Binds specifically to the boxA antiterminator sequence of the ribosomal RNA (rrn) operons. The chain is Transcription antitermination protein NusB from Nitrosomonas europaea (strain ATCC 19718 / CIP 103999 / KCTC 2705 / NBRC 14298).